A 94-amino-acid polypeptide reads, in one-letter code: Integration host factor subunit beta (94 aa).

This sequence belongs to the bacterial histone-like protein family. In terms of assembly, heterodimer of an alpha and a beta chain.

Its function is as follows. This protein is one of the two subunits of integration host factor, a specific DNA-binding protein that functions in genetic recombination as well as in transcriptional and translational control. This chain is Integration host factor subunit beta (ihfB), found in Serratia marcescens.